Consider the following 156-residue polypeptide: Small ribosomal subunit protein uS7 (156 aa).

It belongs to the universal ribosomal protein uS7 family. Part of the 30S ribosomal subunit. Contacts proteins S9 and S11.

Functionally, one of the primary rRNA binding proteins, it binds directly to 16S rRNA where it nucleates assembly of the head domain of the 30S subunit. Is located at the subunit interface close to the decoding center, probably blocks exit of the E-site tRNA. The protein is Small ribosomal subunit protein uS7 of Arthrobacter sp. (strain FB24).